The sequence spans 130 residues: Large ribosomal subunit protein bL12c (130 aa).

Belongs to the bacterial ribosomal protein bL12 family. In terms of assembly, homodimer. Part of the ribosomal stalk of the 50S ribosomal subunit. Forms a multimeric L10(L12)X complex, where L10 forms an elongated spine to which 2 to 4 L12 dimers bind in a sequential fashion. Binds GTP-bound translation factors.

It localises to the plastid. Its function is as follows. Forms part of the ribosomal stalk which helps the ribosome interact with GTP-bound translation factors. Is thus essential for accurate translation. The chain is Large ribosomal subunit protein bL12c from Prototheca wickerhamii.